A 215-amino-acid chain; its full sequence is MVLKVYGPHFASPKRALVTLIEKGVAFETIPVDLMKGEHKQPAYLALQPFGTVPAVVDGDYKIFESRAVMRYVAEKYRSQGPDLLGKTVEDRGQVEQWLDVEATTYHPPLLNLTLHIMFASVMGFPSDEKLIKESEEKLAGVLDVYEAHLSKSKYLAGDFVSLADLAHLPFTDYLVGPIGKAYMIKDRKHVSAWWDDISSRPAWKETVAKYSFPA.

One can recognise a GST N-terminal domain in the interval 2–81 (VLKVYGPHFA…YVAEKYRSQG (80 aa)). 11–12 (AS) contributes to the glutathione binding site. Position 12 is a phosphoserine (Ser-12). Met-35 carries the methionine sulfoxide modification. Glutathione contacts are provided by residues 39-40 (HK), 52-53 (TV), and 65-66 (ES). One can recognise a GST C-terminal domain in the interval 88 to 215 (TVEDRGQVEQ…ETVAKYSFPA (128 aa)). Met-118, Met-123, and Met-184 each carry methionine sulfoxide.

This sequence belongs to the GST superfamily. Phi family. Post-translationally, oxidated at Met-35, Met-118, Met-123 and Met-184 in oxidative stress conditions (e.g. hydrogen peroxide H(2)O(2)).

The protein localises to the cytoplasm. The protein resides in the cytosol. It catalyses the reaction RX + glutathione = an S-substituted glutathione + a halide anion + H(+). Its activity is regulated as follows. Redox-regulated enzyme; in oxidative stress conditions methionine oxidation ensure a thermodynamic and structural compensatory mechanism to guarantee H(2)O(2) peroxidase activity despite transferase activity inhibition. Its function is as follows. In vitro, possesses glutathione S-transferase activity toward 1-chloro-2,4-dinitrobenzene (CDNB) and benzyl isothiocyanate (BITC), and glutathione peroxidase activity toward cumene hydroperoxide and linoleic acid-13-hydroperoxide. May be involved in the conjugation of reduced glutathione to a wide number of exogenous and endogenous hydrophobic electrophiles and have a detoxification role against certain herbicides. This chain is Glutathione S-transferase F9, found in Arabidopsis thaliana (Mouse-ear cress).